The sequence spans 60 residues: Large ribosomal subunit protein uL30 (60 aa).

Belongs to the universal ribosomal protein uL30 family. As to quaternary structure, part of the 50S ribosomal subunit.

The chain is Large ribosomal subunit protein uL30 from Acidovorax ebreus (strain TPSY) (Diaphorobacter sp. (strain TPSY)).